Reading from the N-terminus, the 446-residue chain is Argininosuccinate lyase (446 aa).

It belongs to the lyase 1 family. Argininosuccinate lyase subfamily.

The protein resides in the cytoplasm. It carries out the reaction 2-(N(omega)-L-arginino)succinate = fumarate + L-arginine. Its pathway is amino-acid biosynthesis; L-arginine biosynthesis; L-arginine from L-ornithine and carbamoyl phosphate: step 3/3. This is Argininosuccinate lyase from Phocaeicola vulgatus (strain ATCC 8482 / DSM 1447 / JCM 5826 / CCUG 4940 / NBRC 14291 / NCTC 11154) (Bacteroides vulgatus).